The following is a 118-amino-acid chain: Large ribosomal subunit protein uL18 (118 aa).

Residues 1–26 (MISKPDKNKIRQKRHRRVRGKLSGTA) form a disordered region. The segment covering 10–20 (IRQKRHRRVRG) has biased composition (basic residues).

The protein belongs to the universal ribosomal protein uL18 family. In terms of assembly, part of the 50S ribosomal subunit; part of the 5S rRNA/L5/L18/L25 subcomplex. Contacts the 5S and 23S rRNAs.

This is one of the proteins that bind and probably mediate the attachment of the 5S RNA into the large ribosomal subunit, where it forms part of the central protuberance. This is Large ribosomal subunit protein uL18 from Streptococcus equi subsp. zooepidemicus (strain H70).